A 130-amino-acid polypeptide reads, in one-letter code: Small ribosomal subunit protein uS8y (130 aa).

Belongs to the universal ribosomal protein uS8 family.

This Arabidopsis thaliana (Mouse-ear cress) protein is Small ribosomal subunit protein uS8y (RPS15AC).